The sequence spans 468 residues: 3-isopropylmalate dehydratase large subunit (468 aa).

Residues Cys-347, Cys-407, and Cys-410 each coordinate [4Fe-4S] cluster.

Belongs to the aconitase/IPM isomerase family. LeuC type 1 subfamily. Heterodimer of LeuC and LeuD. Requires [4Fe-4S] cluster as cofactor.

It catalyses the reaction (2R,3S)-3-isopropylmalate = (2S)-2-isopropylmalate. The protein operates within amino-acid biosynthesis; L-leucine biosynthesis; L-leucine from 3-methyl-2-oxobutanoate: step 2/4. Catalyzes the isomerization between 2-isopropylmalate and 3-isopropylmalate, via the formation of 2-isopropylmaleate. The polypeptide is 3-isopropylmalate dehydratase large subunit (Campylobacter jejuni (strain RM1221)).